We begin with the raw amino-acid sequence, 800 residues long: DNA topoisomerase 4 subunit A (800 aa).

In terms of domain architecture, Topo IIA-type catalytic spans 31–495 (LPDVRDGLKP…EIEEIKIDKE (465 aa)). The active-site O-(5'-phospho-DNA)-tyrosine intermediate is Y119.

This sequence belongs to the type II topoisomerase GyrA/ParC subunit family. ParC type 2 subfamily. In terms of assembly, heterotetramer composed of ParC and ParE.

Its subcellular location is the cell membrane. It catalyses the reaction ATP-dependent breakage, passage and rejoining of double-stranded DNA.. Functionally, topoisomerase IV is essential for chromosome segregation. It relaxes supercoiled DNA. Performs the decatenation events required during the replication of a circular DNA molecule. In Staphylococcus aureus (strain Mu50 / ATCC 700699), this protein is DNA topoisomerase 4 subunit A.